Reading from the N-terminus, the 489-residue chain is MKYKDLRDFIAQLEQSGQLKRISREIDPYLEMTEISDRTLRAGGPALLFENPKGYTMPVLTNLFGTPDRVAMGMGQPNVAALRQVGIWLSYLKEPEPPRGFKELMEKLPIFKQVLNMPTKRLSSAPCQQRVLEGEAVDLDQIPIQHCWPGDVAPLVTWGLTITRGPYKKRQNLGIYRQQKIGKNKLIMRWLDHRGGAIDFREWQEAHPGERFPVVVALGADPATILGAVTPVPDTLSEYAFAGLLRGSRTEVVKAVSCDLEVPASAEIVLEGYLEPGEMAPEGPYGDHTGYYNEVDEFPVFTITHMTMRKDAIYHSTYTGRPPDEPAVLGVALNEVFVPLLQKQFPEIVDFYLPPEGCSYRMAVVTIKKRYPGHAKRVMLGVWSFLRQFMYTKFVIVCDDDINARDWKDVIWAITTRMDPARDTTLIEHTPIDYLDFASPVSGLGSKMGLDATNKWPGETNREWGQPIVQDEAVKQKIDALWDELNILG.

Asn-172 contacts Mn(2+). Residues 175 to 177, 189 to 191, and 194 to 195 each bind prenylated FMN; these read IYR, RWL, and RG. Glu-238 contacts Mn(2+). The active-site Proton donor is Asp-287.

It belongs to the UbiD family. As to quaternary structure, homohexamer. Prenylated FMN serves as cofactor. Mn(2+) is required as a cofactor.

The protein resides in the cell membrane. The enzyme catalyses a 4-hydroxy-3-(all-trans-polyprenyl)benzoate + H(+) = a 2-(all-trans-polyprenyl)phenol + CO2. It participates in cofactor biosynthesis; ubiquinone biosynthesis. Its function is as follows. Catalyzes the decarboxylation of 3-octaprenyl-4-hydroxy benzoate to 2-octaprenylphenol, an intermediate step in ubiquinone biosynthesis. The protein is 3-octaprenyl-4-hydroxybenzoate carboxy-lyase of Aeromonas hydrophila subsp. hydrophila (strain ATCC 7966 / DSM 30187 / BCRC 13018 / CCUG 14551 / JCM 1027 / KCTC 2358 / NCIMB 9240 / NCTC 8049).